Consider the following 479-residue polypeptide: Siroheme synthase (479 aa).

The segment at 1-202 is precorrin-2 dehydrogenase /sirohydrochlorin ferrochelatase; that stretch reads MNYLPIFLDL…GRDSEAEAQL (202 aa). NAD(+)-binding positions include 22–23 and 43–44; these read ET and PA. Position 128 is a phosphoserine (serine 128). Residues 217–479 are uroporphyrinogen-III C-methyltransferase; it reads GEVYLVGAGP…TPLEAPDHLA (263 aa). S-adenosyl-L-methionine is bound at residue proline 226. Catalysis depends on aspartate 249, which acts as the Proton acceptor. The active-site Proton donor is lysine 271. S-adenosyl-L-methionine contacts are provided by residues 302 to 304, isoleucine 307, 332 to 333, methionine 384, and glycine 413; these read GGD and TA.

The protein in the N-terminal section; belongs to the precorrin-2 dehydrogenase / sirohydrochlorin ferrochelatase family. In the C-terminal section; belongs to the precorrin methyltransferase family.

It catalyses the reaction uroporphyrinogen III + 2 S-adenosyl-L-methionine = precorrin-2 + 2 S-adenosyl-L-homocysteine + H(+). The enzyme catalyses precorrin-2 + NAD(+) = sirohydrochlorin + NADH + 2 H(+). The catalysed reaction is siroheme + 2 H(+) = sirohydrochlorin + Fe(2+). Its pathway is cofactor biosynthesis; adenosylcobalamin biosynthesis; precorrin-2 from uroporphyrinogen III: step 1/1. It participates in cofactor biosynthesis; adenosylcobalamin biosynthesis; sirohydrochlorin from precorrin-2: step 1/1. The protein operates within porphyrin-containing compound metabolism; siroheme biosynthesis; precorrin-2 from uroporphyrinogen III: step 1/1. It functions in the pathway porphyrin-containing compound metabolism; siroheme biosynthesis; siroheme from sirohydrochlorin: step 1/1. Its pathway is porphyrin-containing compound metabolism; siroheme biosynthesis; sirohydrochlorin from precorrin-2: step 1/1. Its function is as follows. Multifunctional enzyme that catalyzes the SAM-dependent methylations of uroporphyrinogen III at position C-2 and C-7 to form precorrin-2 via precorrin-1. Then it catalyzes the NAD-dependent ring dehydrogenation of precorrin-2 to yield sirohydrochlorin. Finally, it catalyzes the ferrochelation of sirohydrochlorin to yield siroheme. In Thiobacillus denitrificans (strain ATCC 25259 / T1), this protein is Siroheme synthase.